The sequence spans 139 residues: Large ribosomal subunit protein uL16 (139 aa).

It belongs to the universal ribosomal protein uL16 family. As to quaternary structure, part of the 50S ribosomal subunit.

Binds 23S rRNA and is also seen to make contacts with the A and possibly P site tRNAs. This chain is Large ribosomal subunit protein uL16, found in Chlorobium phaeobacteroides (strain BS1).